A 140-amino-acid chain; its full sequence is 6,7-dimethyl-8-ribityllumazine synthase (140 aa).

5-amino-6-(D-ribitylamino)uracil is bound by residues Phe11, 43–45 (SFD), and 67–69 (CVI). 72–73 (DT) serves as a coordination point for (2S)-2-hydroxy-3-oxobutyl phosphate. His75 acts as the Proton donor in catalysis. Residue Leu100 participates in 5-amino-6-(D-ribitylamino)uracil binding. A (2S)-2-hydroxy-3-oxobutyl phosphate-binding site is contributed by Arg115.

This sequence belongs to the DMRL synthase family. Forms an icosahedral capsid composed of 60 subunits, arranged as a dodecamer of pentamers.

The catalysed reaction is (2S)-2-hydroxy-3-oxobutyl phosphate + 5-amino-6-(D-ribitylamino)uracil = 6,7-dimethyl-8-(1-D-ribityl)lumazine + phosphate + 2 H2O + H(+). The protein operates within cofactor biosynthesis; riboflavin biosynthesis; riboflavin from 2-hydroxy-3-oxobutyl phosphate and 5-amino-6-(D-ribitylamino)uracil: step 1/2. Its function is as follows. Catalyzes the formation of 6,7-dimethyl-8-ribityllumazine by condensation of 5-amino-6-(D-ribitylamino)uracil with 3,4-dihydroxy-2-butanone 4-phosphate. This is the penultimate step in the biosynthesis of riboflavin. In Methanococcus vannielii (strain ATCC 35089 / DSM 1224 / JCM 13029 / OCM 148 / SB), this protein is 6,7-dimethyl-8-ribityllumazine synthase.